A 236-amino-acid polypeptide reads, in one-letter code: 2-C-methyl-D-erythritol 4-phosphate cytidylyltransferase (236 aa).

It belongs to the IspD/TarI cytidylyltransferase family. IspD subfamily.

It carries out the reaction 2-C-methyl-D-erythritol 4-phosphate + CTP + H(+) = 4-CDP-2-C-methyl-D-erythritol + diphosphate. Its pathway is isoprenoid biosynthesis; isopentenyl diphosphate biosynthesis via DXP pathway; isopentenyl diphosphate from 1-deoxy-D-xylulose 5-phosphate: step 2/6. Catalyzes the formation of 4-diphosphocytidyl-2-C-methyl-D-erythritol from CTP and 2-C-methyl-D-erythritol 4-phosphate (MEP). In Azoarcus sp. (strain BH72), this protein is 2-C-methyl-D-erythritol 4-phosphate cytidylyltransferase.